We begin with the raw amino-acid sequence, 314 residues long: DNA-directed RNA polymerase subunit alpha (314 aa).

The tract at residues 1-228 (MIEIEKPRIE…EHLNIFVGLT (228 aa)) is alpha N-terminal domain (alpha-NTD). The tract at residues 245–314 (KEKVLEMSIE…DLGLGLRKED (70 aa)) is alpha C-terminal domain (alpha-CTD).

This sequence belongs to the RNA polymerase alpha chain family. As to quaternary structure, homodimer. The RNAP catalytic core consists of 2 alpha, 1 beta, 1 beta' and 1 omega subunit. When a sigma factor is associated with the core the holoenzyme is formed, which can initiate transcription.

It carries out the reaction RNA(n) + a ribonucleoside 5'-triphosphate = RNA(n+1) + diphosphate. Its function is as follows. DNA-dependent RNA polymerase catalyzes the transcription of DNA into RNA using the four ribonucleoside triphosphates as substrates. The chain is DNA-directed RNA polymerase subunit alpha from Staphylococcus saprophyticus subsp. saprophyticus (strain ATCC 15305 / DSM 20229 / NCIMB 8711 / NCTC 7292 / S-41).